Here is an 83-residue protein sequence, read N- to C-terminus: Acid shock protein (83 aa).

Residues 1–21 form the signal peptide; that stretch reads MKKVLALVVAAAMGLSSAAFA. Positions 22-40 are enriched in low complexity; the sequence is AETATPAKTATPAKTTQNT. The propeptide occupies 22–56; the sequence is AETATPAKTATPAKTTQNTQHHKKQHKKTVEQKAQ. Residues 22–83 form a disordered region; that stretch reads AETATPAKTA…TSKTTSQPAA (62 aa). Positions 57 to 70 are enriched in basic residues; that stretch reads AAKKHQKKDGKKAP. Residues 71–83 are compositionally biased toward low complexity; the sequence is AKSTSKTTSQPAA.

This sequence belongs to the Asr family. Post-translationally, proteolytic processing gives rise to the active protein.

The protein resides in the periplasm. Required for growth and/or survival at acidic conditions. This Salmonella heidelberg (strain SL476) protein is Acid shock protein.